We begin with the raw amino-acid sequence, 60 residues long: Phycobilisome degradation protein NblA homolog 2 (60 aa).

The protein to Synechococcus PCC 7942 NblA and some, to chloroplast ycf18.

The chain is Phycobilisome degradation protein NblA homolog 2 from Synechocystis sp. (strain ATCC 27184 / PCC 6803 / Kazusa).